A 129-amino-acid polypeptide reads, in one-letter code: Lysozyme C (129 aa).

A C-type lysozyme domain is found at 1–129; sequence KVYGRCELAA…VHAWIRGCRL (129 aa). 4 disulfides stabilise this stretch: cysteine 6–cysteine 127, cysteine 30–cysteine 115, cysteine 64–cysteine 80, and cysteine 76–cysteine 94. Active-site residues include glutamate 35 and aspartate 52.

Belongs to the glycosyl hydrolase 22 family. Monomer.

The protein resides in the secreted. It carries out the reaction Hydrolysis of (1-&gt;4)-beta-linkages between N-acetylmuramic acid and N-acetyl-D-glucosamine residues in a peptidoglycan and between N-acetyl-D-glucosamine residues in chitodextrins.. Lysozymes have primarily a bacteriolytic function; those in tissues and body fluids are associated with the monocyte-macrophage system and enhance the activity of immunoagents. This is Lysozyme C (LYZ) from Lophophorus impejanus (Himalayan monal pheasant).